A 246-amino-acid chain; its full sequence is Bacteriorhodopsin-II-like protein (246 aa).

Transmembrane regions (helical) follow at residues 7–27, 45–65, 82–102, 107–127, 135–155, 182–202, and 205–225; these read EATW…YFAV, TLIP…LGVI, YADW…VAGA, LYKL…GSMM, IVWW…LLGE, WALY…IIAV, and EIML…AVLL. Lys-217 bears the N6-(retinylidene)lysine mark.

It belongs to the archaeal/bacterial/fungal opsin family. Post-translationally, the covalent binding of retinal to the apoprotein, bacterioopsin, generates bacteriorhodopsin.

Its subcellular location is the cell membrane. Has no proton-pumping activity but is potentially capable of functioning as a sensory SRII-like protein. The chromophore contains 36.5% all-trans-, 7.6% 11-cis- and 56.4% 13-cis-retinal in the dark and 30.1% 11-cis- and 47.7% 13-cis-retinal upon illumination with &gt;460 nm light. The protein is Bacteriorhodopsin-II-like protein (bop2) of Haloquadratum walsbyi (strain DSM 16790 / HBSQ001).